The chain runs to 369 residues: Glutamate 5-kinase (369 aa).

Lysine 7 contacts ATP. Serine 48, aspartate 135, and asparagine 147 together coordinate substrate. Residues 167 to 168 and 208 to 214 each bind ATP; these read TD and SGGMASK. Residues 275–353 form the PUA domain; it reads AGALHLDEGA…HEIAALLGIE (79 aa).

The protein belongs to the glutamate 5-kinase family.

Its subcellular location is the cytoplasm. It carries out the reaction L-glutamate + ATP = L-glutamyl 5-phosphate + ADP. The protein operates within amino-acid biosynthesis; L-proline biosynthesis; L-glutamate 5-semialdehyde from L-glutamate: step 1/2. Its function is as follows. Catalyzes the transfer of a phosphate group to glutamate to form L-glutamate 5-phosphate. The sequence is that of Glutamate 5-kinase from Gloeobacter violaceus (strain ATCC 29082 / PCC 7421).